The sequence spans 516 residues: 2,3-bisphosphoglycerate-independent phosphoglycerate mutase (516 aa).

Mn(2+)-binding residues include aspartate 13 and serine 63. Serine 63 acts as the Phosphoserine intermediate in catalysis. Substrate-binding positions include histidine 124, 154-155, arginine 186, arginine 192, 262-265, and lysine 337; these read RD and RPDR. Residues aspartate 404, histidine 408, aspartate 445, histidine 446, and histidine 464 each coordinate Mn(2+).

Belongs to the BPG-independent phosphoglycerate mutase family. Monomer. Mn(2+) serves as cofactor.

The enzyme catalyses (2R)-2-phosphoglycerate = (2R)-3-phosphoglycerate. It functions in the pathway carbohydrate degradation; glycolysis; pyruvate from D-glyceraldehyde 3-phosphate: step 3/5. Its function is as follows. Catalyzes the interconversion of 2-phosphoglycerate and 3-phosphoglycerate. This Cellvibrio japonicus (strain Ueda107) (Pseudomonas fluorescens subsp. cellulosa) protein is 2,3-bisphosphoglycerate-independent phosphoglycerate mutase.